A 603-amino-acid polypeptide reads, in one-letter code: Protein regulator of cytokinesis 1 (603 aa).

Residues 1–341 form a dimerization region; that stretch reads MRRSEVLADE…HLHDAEIVRL (341 aa). Coiled coils occupy residues 34–65, 96–136, 211–246, 272–304, and 383–463; these read EQRL…RERL, ILQL…DILC, SLEN…IREL, RNAL…LAQF, and GNLL…AEML. A spectrin-fold region spans residues 342–466; that stretch reads RNYYDVHKEL…QTEAEMLYGS (125 aa). Basic and acidic residues predominate over residues 447-459; sequence KQERQLKNKKQTE. Positions 447–502 are disordered; it reads KQERQLKNKKQTEAEMLYGSTPRTPSKRPGQTPKKSGKMNTTTMSSATPNSSIRPV. The segment at 467–603 is unstructured, Arg/Lys rich; the sequence is TPRTPSKRPG…RILNSTNIQS (137 aa). A Phosphothreonine; by CDK1 modification is found at Thr470. The segment covering 484–499 has biased composition (polar residues); it reads KMNTTTMSSATPNSSI. 2 positions are modified to phosphoserine: Ser510 and Ser568. Thr575 bears the Phosphothreonine mark. The tract at residues 583–603 is disordered; the sequence is LSKASRSDATSRILNSTNIQS. Residues 589–603 are compositionally biased toward polar residues; sequence SDATSRILNSTNIQS. Thr599 carries the phosphothreonine; by PLK1 modification.

It belongs to the MAP65/ASE1 family. As to quaternary structure, homodimer. Interacts with the C-terminal Rho-GAP domain and the basic region of RACGAP1. The interaction with RACGAP1 inhibits its GAP activity towards CDC42 in vitro, which may be required for maintaining normal spindle morphology. Interacts (via N-terminus) with the C-terminus of CENPE (via C-terminus); the interaction occurs during late mitosis. Interacts (via N-terminus) with KIF4A (via C-terminus); the interaction is required for the progression of mitosis. Interacts (via N-terminus) with KIF23 (via C-terminus); the interaction occurs during late mitosis. Interacts with KIF14 and KIF20A. Interacts with PLK1. Interacts with KIF20B. Interacts with CCDC66. Phosphorylation by CDK1 in early mitosis holds PRC1 in an inactive monomeric state, during the metaphase to anaphase transition, PRC1 is dephosphorylated, promoting interaction with KIF4A, which then translocates PRC1 along mitotic spindles to the plus ends of antiparallel interdigitating microtubules. Dephosphorylation also promotes MT-bundling activity by allowing dimerization. Phosphorylation by CDK1 prevents PLK1-binding: upon degradation of CDK1 at anaphase and dephosphorylation, it is then phosphorylated by PLK1, leading to cytokinesis.

It is found in the nucleus. Its subcellular location is the cytoplasm. The protein localises to the cytoskeleton. The protein resides in the spindle pole. It localises to the midbody. In terms of biological role, key regulator of cytokinesis that cross-links antiparrallel microtubules at an average distance of 35 nM. Essential for controlling the spatiotemporal formation of the midzone and successful cytokinesis. Required for KIF14 localization to the central spindle and midbody. Required to recruit PLK1 to the spindle. Stimulates PLK1 phosphorylation of RACGAP1 to allow recruitment of ECT2 to the central spindle. Acts as an oncogene for promoting bladder cancer cells proliferation, apoptosis inhibition and carcinogenic progression. The chain is Protein regulator of cytokinesis 1 from Mus musculus (Mouse).